The chain runs to 350 residues: Phospho-2-dehydro-3-deoxyheptonate aldolase, Phe-sensitive (350 aa).

N6-acetyllysine is present on lysine 244.

Belongs to the class-I DAHP synthase family. In terms of assembly, homotetramer.

The catalysed reaction is D-erythrose 4-phosphate + phosphoenolpyruvate + H2O = 7-phospho-2-dehydro-3-deoxy-D-arabino-heptonate + phosphate. Its pathway is metabolic intermediate biosynthesis; chorismate biosynthesis; chorismate from D-erythrose 4-phosphate and phosphoenolpyruvate: step 1/7. In terms of biological role, stereospecific condensation of phosphoenolpyruvate (PEP) and D-erythrose-4-phosphate (E4P) giving rise to 3-deoxy-D-arabino-heptulosonate-7-phosphate (DAHP). This chain is Phospho-2-dehydro-3-deoxyheptonate aldolase, Phe-sensitive (aroG), found in Escherichia coli O157:H7.